A 389-amino-acid polypeptide reads, in one-letter code: Formate-dependent phosphoribosylglycinamide formyltransferase (389 aa).

N(1)-(5-phospho-beta-D-ribosyl)glycinamide contacts are provided by residues 12–13 (EL) and Glu72. Residues Arg104, Lys145, 150-155 (SSGKGQ), 185-188 (EAFV), and Glu193 contribute to the ATP site. In terms of domain architecture, ATP-grasp spans 109-300 (DLASKELGLR…EFELHARAVL (192 aa)). Mg(2+) contacts are provided by Glu258 and Glu270. N(1)-(5-phospho-beta-D-ribosyl)glycinamide contacts are provided by residues Asp277, Lys348, and 355-356 (RR).

Belongs to the PurK/PurT family. As to quaternary structure, homodimer.

It carries out the reaction N(1)-(5-phospho-beta-D-ribosyl)glycinamide + formate + ATP = N(2)-formyl-N(1)-(5-phospho-beta-D-ribosyl)glycinamide + ADP + phosphate + H(+). It functions in the pathway purine metabolism; IMP biosynthesis via de novo pathway; N(2)-formyl-N(1)-(5-phospho-D-ribosyl)glycinamide from N(1)-(5-phospho-D-ribosyl)glycinamide (formate route): step 1/1. Involved in the de novo purine biosynthesis. Catalyzes the transfer of formate to 5-phospho-ribosyl-glycinamide (GAR), producing 5-phospho-ribosyl-N-formylglycinamide (FGAR). Formate is provided by PurU via hydrolysis of 10-formyl-tetrahydrofolate. The polypeptide is Formate-dependent phosphoribosylglycinamide formyltransferase (Chlorobium phaeobacteroides (strain DSM 266 / SMG 266 / 2430)).